Consider the following 328-residue polypeptide: tRNA uridine(34) hydroxylase (328 aa).

Positions 122–218 (QENRCLVLDV…YGLKMGTGKW (97 aa)) constitute a Rhodanese domain. The active-site Cysteine persulfide intermediate is C178.

This sequence belongs to the TrhO family.

The enzyme catalyses uridine(34) in tRNA + AH2 + O2 = 5-hydroxyuridine(34) in tRNA + A + H2O. Its function is as follows. Catalyzes oxygen-dependent 5-hydroxyuridine (ho5U) modification at position 34 in tRNAs. The polypeptide is tRNA uridine(34) hydroxylase (Chlamydia muridarum (strain MoPn / Nigg)).